A 702-amino-acid polypeptide reads, in one-letter code: Polyribonucleotide nucleotidyltransferase (702 aa).

Mg(2+) is bound by residues Asp-485 and Asp-491. Residues 552–611 enclose the KH domain; that stretch reads PKTSTLQIDPEKIRDVIGAGGKVINKIIADTGVKIDIKEDGLVYVSSAESEGVKEAVKII. Residues 621–689 form the S1 motif domain; it reads GEIYLGKVTK…SQGRINLSRK (69 aa).

Belongs to the polyribonucleotide nucleotidyltransferase family. The cofactor is Mg(2+).

It is found in the cytoplasm. The enzyme catalyses RNA(n+1) + phosphate = RNA(n) + a ribonucleoside 5'-diphosphate. In terms of biological role, involved in mRNA degradation. Catalyzes the phosphorolysis of single-stranded polyribonucleotides processively in the 3'- to 5'-direction. The chain is Polyribonucleotide nucleotidyltransferase from Clostridium perfringens (strain 13 / Type A).